The following is a 300-amino-acid chain: Ubiquinone biosynthesis protein COQ4, mitochondrial (300 aa).

The Zn(2+) site is built by histidine 173, aspartate 174, histidine 177, and glutamate 189.

Belongs to the COQ4 family. Component of a multi-subunit COQ enzyme complex, composed of at least COQ3, COQ4, COQ5, COQ6, COQ7 and COQ9. Requires Zn(2+) as cofactor.

The protein localises to the mitochondrion inner membrane. The enzyme catalyses a 4-hydroxy-3-methoxy-5-(all-trans-polyprenyl)benzoate + H(+) = a 2-methoxy-6-(all-trans-polyprenyl)phenol + CO2. The protein operates within cofactor biosynthesis; ubiquinone biosynthesis. Functionally, lyase that catalyzes the C1-decarboxylation of 4-hydroxy-3-methoxy-5-(all-trans-polyprenyl)benzoic acid into 2-methoxy-6-(all-trans-polyprenyl)phenol during ubiquinone biosynthesis. The polypeptide is Ubiquinone biosynthesis protein COQ4, mitochondrial (Cryptococcus neoformans var. neoformans serotype D (strain JEC21 / ATCC MYA-565) (Filobasidiella neoformans)).